A 127-amino-acid polypeptide reads, in one-letter code: Thioredoxin domain-containing protein 8 (127 aa).

The 126-residue stretch at Val-2 to Met-127 folds into the Thioredoxin domain. An intrachain disulfide couples Cys-32 to Cys-35.

It belongs to the thioredoxin family. In terms of tissue distribution, testis-specific. Only expressed during spermiogenesis, prominently in the Golgi apparatus of pachytene spermatocytes and round and elongated spermatids, with a transient localization in the developing acrosome of round spermatids (at protein level).

It is found in the cytoplasm. The protein localises to the golgi apparatus. In terms of biological role, may be required for post-translational modifications of proteins required for acrosomal biogenesis. May act by reducing disulfide bonds within the sperm. The chain is Thioredoxin domain-containing protein 8 (Txndc8) from Mus musculus (Mouse).